The primary structure comprises 62 residues: uncharacterized protein (62 aa).

Positions 1–18 are enriched in polar residues; the sequence is MTTNRVDPLEQTSPNTPT. The tract at residues 1 to 24 is disordered; sequence MTTNRVDPLEQTSPNTPTSKREKA.

This is an uncharacterized protein from Rickettsia conorii (strain ATCC VR-613 / Malish 7).